Reading from the N-terminus, the 309-residue chain is Homoserine kinase (309 aa).

An ATP-binding site is contributed by 91–101; that stretch reads PIGSGLGSSAC.

The protein belongs to the GHMP kinase family. Homoserine kinase subfamily.

The protein localises to the cytoplasm. The enzyme catalyses L-homoserine + ATP = O-phospho-L-homoserine + ADP + H(+). It functions in the pathway amino-acid biosynthesis; L-threonine biosynthesis; L-threonine from L-aspartate: step 4/5. In terms of biological role, catalyzes the ATP-dependent phosphorylation of L-homoserine to L-homoserine phosphate. The polypeptide is Homoserine kinase (Pectobacterium atrosepticum (strain SCRI 1043 / ATCC BAA-672) (Erwinia carotovora subsp. atroseptica)).